Here is a 288-residue protein sequence, read N- to C-terminus: Acetyl-coenzyme A carboxylase carboxyl transferase subunit beta (288 aa).

Residues 34–288 (LFAKCPACKH…HLVAFHGGGQ (255 aa)) form the CoA carboxyltransferase N-terminal domain. Zn(2+)-binding residues include Cys-38, Cys-41, Cys-56, and Cys-59. A C4-type zinc finger spans residues 38–59 (CPACKHMIYKKDLGLAKICPTC).

The protein belongs to the AccD/PCCB family. In terms of assembly, acetyl-CoA carboxylase is a heterohexamer composed of biotin carboxyl carrier protein (AccB), biotin carboxylase (AccC) and two subunits each of ACCase subunit alpha (AccA) and ACCase subunit beta (AccD). Requires Zn(2+) as cofactor.

It is found in the cytoplasm. It carries out the reaction N(6)-carboxybiotinyl-L-lysyl-[protein] + acetyl-CoA = N(6)-biotinyl-L-lysyl-[protein] + malonyl-CoA. It participates in lipid metabolism; malonyl-CoA biosynthesis; malonyl-CoA from acetyl-CoA: step 1/1. Component of the acetyl coenzyme A carboxylase (ACC) complex. Biotin carboxylase (BC) catalyzes the carboxylation of biotin on its carrier protein (BCCP) and then the CO(2) group is transferred by the transcarboxylase to acetyl-CoA to form malonyl-CoA. The sequence is that of Acetyl-coenzyme A carboxylase carboxyl transferase subunit beta from Streptococcus pyogenes serotype M1.